Consider the following 430-residue polypeptide: N-acylneuraminate cytidylyltransferase A (430 aa).

Residues 1 to 29 are disordered; sequence MDAVNENGKRAMKDDSHGNSTSPKRRKSR. Over residues 7 to 17 the composition is skewed to basic and acidic residues; that stretch reads NGKRAMKDDSH. The Bipartite nuclear localization signal motif lies at 9-27; that stretch reads KRAMKDDSHGNSTSPKRRK. The substrate site is built by Arg38, Asn48, Arg97, Ser106, Ser108, and Gln129. Arg187 is a catalytic residue.

Belongs to the CMP-NeuNAc synthase family. Homotetramer.

It is found in the nucleus. The catalysed reaction is an N-acylneuraminate + CTP = a CMP-N-acyl-beta-neuraminate + diphosphate. Its pathway is amino-sugar metabolism; N-acetylneuraminate metabolism. Catalyzes the activation of N-acetylneuraminic acid (NeuNAc) to cytidine 5'-monophosphate N-acetylneuraminic acid (CMP-NeuNAc), a substrate required for the addition of sialic acid. Also has activity towards N-glycolylneuraminic acid (Neu5Gc). Has weak activity towards 2-keto-3-deoxy-D-glycero-D-galacto-nononic acid (KDN). The sequence is that of N-acylneuraminate cytidylyltransferase A from Danio rerio (Zebrafish).